The primary structure comprises 568 residues: ATP-dependent RNA helicase MRH4, mitochondrial (568 aa).

Residues 1-50 (MVSILAIRTFNPLGHFVSTQCVRAYAINSVRAGSKSSSVRAGSKNDTTRA) constitute a mitochondrion transit peptide. The segment covering 36 to 49 (SSSVRAGSKNDTTR) has biased composition (polar residues). A disordered region spans residues 36–64 (SSSVRAGSKNDTTRASSKKNKAGKSKLQL). The Q motif signature appears at 143-150 (EIHPSPIQ). The 189-residue stretch at 160-348 (NLMEPKLQVH…TKMFPNAIPL (189 aa)) folds into the Helicase ATP-binding domain. 173 to 180 (AETGSGKT) lines the ATP pocket. The short motif at 296 to 299 (DEAD) is the DEAD box element. A Helicase C-terminal domain is found at 379–568 (ALAQTLYAIA…TILKKNKALT (190 aa)).

This sequence belongs to the DEAD box helicase family. MRH4 subfamily.

It localises to the mitochondrion. It carries out the reaction ATP + H2O = ADP + phosphate + H(+). In terms of biological role, ATP-binding RNA helicase involved in mitochondrial RNA metabolism. Required for maintenance of mitochondrial DNA. The protein is ATP-dependent RNA helicase MRH4, mitochondrial (MRH4) of Candida glabrata (strain ATCC 2001 / BCRC 20586 / JCM 3761 / NBRC 0622 / NRRL Y-65 / CBS 138) (Yeast).